A 158-amino-acid chain; its full sequence is Urease accessory protein UreE (158 aa).

Residues 133-158 form a disordered region; sequence PEGGAYQAHSHDGHSHHQGHTHDHHD. The segment covering 141–158 has biased composition (basic and acidic residues); it reads HSHDGHSHHQGHTHDHHD.

Belongs to the UreE family.

The protein resides in the cytoplasm. Its function is as follows. Involved in urease metallocenter assembly. Binds nickel. Probably functions as a nickel donor during metallocenter assembly. The polypeptide is Urease accessory protein UreE (Chelativorans sp. (strain BNC1)).